A 440-amino-acid chain; its full sequence is Muscarinic acetylcholine receptor M2 (440 aa).

The chain crosses the membrane as a helical span at residues 1 to 19; that stretch reads VLVAGSLSLVTIIGNILVM. Topologically, residues 20-33 are cytoplasmic; sequence VSIKVNRHLQTVNN. Residues 34-54 traverse the membrane as a helical segment; sequence YFLFSLACADLIIGVFSMNLY. At 55–71 the chain is on the extracellular side; that stretch reads TLYTVIGYWPLGPVVCD. Cys70 and Cys150 are joined by a disulfide. The chain crosses the membrane as a helical span at residues 72 to 93; it reads LWLALDYVVSNASVMNLLIISF. Positions 94–96 match the Important for signaling motif; sequence DRY. The Cytoplasmic portion of the chain corresponds to 94–113; the sequence is DRYFCVTKPLTYPVKRTTKM. The helical transmembrane segment at 114-136 threads the bilayer; it reads AGMMIAAAWVLSFILWAPAILFW. Residues 137 to 158 lie on the Extracellular side of the membrane; sequence QFIVGVRTVEDGECYIQFFSNA. The helical transmembrane segment at 159–183 threads the bilayer; that stretch reads AVTFGTAIAAFYLPVIIMTVLYWHI. The Cytoplasmic portion of the chain corresponds to 184–361; that stretch reads SRASKSRIKK…PPSREKKVTR (178 aa). A disordered region spans residues 192–329; it reads KKDKKEPVAN…VVGSSGQNGD (138 aa). Residue Ser206 is modified to Phosphoserine. Basic and acidic residues predominate over residues 228-244; sequence GLEHNKIQNGKAPRDPV. Polar residues-rich tracts occupy residues 258–267, 278–287, and 308–327; these read NDSTSVSAVA, DENTVSTSLG, and SDSCTPTNTTVEVVGSSGQN. The helical transmembrane segment at 362-384 threads the bilayer; that stretch reads TILAILLAFIITWAPYNVMVLIN. Residues 385-392 are Extracellular-facing; the sequence is TFCAPCIP. Cys387 and Cys390 are disulfide-bonded. Residues 393 to 416 traverse the membrane as a helical segment; it reads NTVWTIGYWLCYINSTINPACYAL. Residues 410-414 carry the Important for signaling motif; the sequence is NPACY. The Cytoplasmic portion of the chain corresponds to 417–440; the sequence is CNATFKKTFKHLLMCHYKNIGATR. Residues Thr420, Thr424, and Thr439 each carry the phosphothreonine modification.

It belongs to the G-protein coupled receptor 1 family. Muscarinic acetylcholine receptor subfamily. CHRM2 sub-subfamily. As to quaternary structure, interacts with ARRB1 and ARRB2. Interacts with RACK1; the interaction regulates CHRM2 internalization. In terms of processing, phosphorylated in response to agonist treatment.

It is found in the cell membrane. The protein resides in the postsynaptic cell membrane. In terms of biological role, the muscarinic acetylcholine receptor mediates various cellular responses, including inhibition of adenylate cyclase, breakdown of phosphoinositides and modulation of potassium channels through the action of G proteins. Primary transducing effect is adenylate cyclase inhibition. Signaling promotes phospholipase C activity, leading to the release of inositol trisphosphate (IP3); this then triggers calcium ion release into the cytosol. This chain is Muscarinic acetylcholine receptor M2 (CHRM2), found in Pan troglodytes (Chimpanzee).